Consider the following 285-residue polypeptide: Probable endonuclease 4 (285 aa).

Residues H69, H109, E145, D179, H182, H216, D229, H231, and E261 each coordinate Zn(2+).

This sequence belongs to the AP endonuclease 2 family. It depends on Zn(2+) as a cofactor.

The catalysed reaction is Endonucleolytic cleavage to 5'-phosphooligonucleotide end-products.. Functionally, endonuclease IV plays a role in DNA repair. It cleaves phosphodiester bonds at apurinic or apyrimidinic (AP) sites, generating a 3'-hydroxyl group and a 5'-terminal sugar phosphate. The protein is Probable endonuclease 4 of Salmonella typhimurium (strain LT2 / SGSC1412 / ATCC 700720).